A 400-amino-acid polypeptide reads, in one-letter code: Riboflavin biosynthesis protein RibBA (400 aa).

The interval 1–202 is DHBP synthase; that stretch reads MTTFGTIEQA…IADLVMYRRR (202 aa). Residues 28–29, D33, 141–145, and E165 each bind D-ribulose 5-phosphate; these read RE and RTGHT. E29 serves as a coordination point for Mg(2+). H144 is a Mg(2+) binding site. A GTP cyclohydrolase II region spans residues 203–400; the sequence is TEKQVELVAE…KRDRMGHLLG (198 aa). 253–257 provides a ligand contact to GTP; that stretch reads RAHSE. C258, C269, and C271 together coordinate Zn(2+). GTP contacts are provided by residues Q274, 297–299, and T319; that span reads EGR. D331 serves as the catalytic Proton acceptor; for GTP cyclohydrolase activity. The active-site Nucleophile; for GTP cyclohydrolase activity is R333. 2 residues coordinate GTP: T354 and K359.

In the N-terminal section; belongs to the DHBP synthase family. This sequence in the C-terminal section; belongs to the GTP cyclohydrolase II family. The cofactor is Mg(2+). Mn(2+) is required as a cofactor. It depends on Zn(2+) as a cofactor.

The enzyme catalyses D-ribulose 5-phosphate = (2S)-2-hydroxy-3-oxobutyl phosphate + formate + H(+). The catalysed reaction is GTP + 4 H2O = 2,5-diamino-6-hydroxy-4-(5-phosphoribosylamino)-pyrimidine + formate + 2 phosphate + 3 H(+). The protein operates within cofactor biosynthesis; riboflavin biosynthesis; 2-hydroxy-3-oxobutyl phosphate from D-ribulose 5-phosphate: step 1/1. It participates in cofactor biosynthesis; riboflavin biosynthesis; 5-amino-6-(D-ribitylamino)uracil from GTP: step 1/4. Functionally, catalyzes the conversion of D-ribulose 5-phosphate to formate and 3,4-dihydroxy-2-butanone 4-phosphate. Its function is as follows. Catalyzes the conversion of GTP to 2,5-diamino-6-ribosylamino-4(3H)-pyrimidinone 5'-phosphate (DARP), formate and pyrophosphate. The protein is Riboflavin biosynthesis protein RibBA of Salinispora tropica (strain ATCC BAA-916 / DSM 44818 / JCM 13857 / NBRC 105044 / CNB-440).